The chain runs to 291 residues: S-methyl-5'-thioadenosine phosphorylase (291 aa).

Phosphate contacts are provided by residues S12, 54–55, and 87–88; these read RH and SA. A substrate-binding site is contributed by M185. Residue T186 coordinates phosphate. 209–211 lines the substrate pocket; it reads DFD.

Belongs to the PNP/MTAP phosphorylase family. MTAP subfamily. Homohexamer. Dimer of a homotrimer.

The catalysed reaction is S-methyl-5'-thioadenosine + phosphate = 5-(methylsulfanyl)-alpha-D-ribose 1-phosphate + adenine. Its pathway is amino-acid biosynthesis; L-methionine biosynthesis via salvage pathway; S-methyl-5-thio-alpha-D-ribose 1-phosphate from S-methyl-5'-thioadenosine (phosphorylase route): step 1/1. Catalyzes the reversible phosphorylation of S-methyl-5'-thioadenosine (MTA) to adenine and 5-methylthioribose-1-phosphate. Involved in the breakdown of MTA, a major by-product of polyamine biosynthesis. Responsible for the first step in the methionine salvage pathway after MTA has been generated from S-adenosylmethionine. Has broad substrate specificity with 6-aminopurine nucleosides as preferred substrates. This chain is S-methyl-5'-thioadenosine phosphorylase, found in Bradyrhizobium diazoefficiens (strain JCM 10833 / BCRC 13528 / IAM 13628 / NBRC 14792 / USDA 110).